A 352-amino-acid chain; its full sequence is Glycerol-1-phosphate dehydrogenase [NAD(P)+] (352 aa).

NAD(+) contacts are provided by residues 99-103 and 121-124; these read GKSID and TVAS. Residue aspartate 126 participates in substrate binding. Serine 130 is an NAD(+) binding site. Aspartate 173 provides a ligand contact to substrate. Residues aspartate 173 and histidine 253 each coordinate Zn(2+). Histidine 257 contributes to the substrate binding site. Histidine 269 serves as a coordination point for Zn(2+).

It belongs to the glycerol-1-phosphate dehydrogenase family. Homodimer. Requires Zn(2+) as cofactor.

Its subcellular location is the cytoplasm. It carries out the reaction sn-glycerol 1-phosphate + NAD(+) = dihydroxyacetone phosphate + NADH + H(+). The enzyme catalyses sn-glycerol 1-phosphate + NADP(+) = dihydroxyacetone phosphate + NADPH + H(+). It participates in membrane lipid metabolism; glycerophospholipid metabolism. Totally inhibited by EDTA in vitro. Catalyzes the NAD(P)H-dependent reduction of dihydroxyacetonephosphate (DHAP or glycerone phosphate) to glycerol 1-phosphate (G1P). The G1P thus generated is used as the glycerophosphate backbone of phospholipids in the cellular membranes of Archaea. Is also able to catalyze the reverse reaction, i.e. the NAD(+)-dependent oxidation of G1P but not of G3P. Is not active toward glycerol, dihydroxyacetone, glyceraldehyde phosphate, and glycerol-2-phosphate. This Aeropyrum pernix (strain ATCC 700893 / DSM 11879 / JCM 9820 / NBRC 100138 / K1) protein is Glycerol-1-phosphate dehydrogenase [NAD(P)+] (egsA).